Reading from the N-terminus, the 283-residue chain is MKQYLALCERIINEGVWVENERTGKRCLTVINADLEYDVAANEFPLITTRKSFWKGAIAELLGYLRGYDNAADFRKLGAKTWDANANENSAWLNNPHRKGHDDMGRVYGVQGRAWAKPDGGVVDQLRKIIDNLSKGVDDRGEILSFYNPGEFHMGCLRPCMHTHNFSLLGDTLYLNSFQRSCDVPLGLNFNQVQVFALLSIVAQITGHKPGKAYHKIVNAHIYEDQLPLMQEVQLKREPFPSPKLSINPDIKSLEDLETWVTMDDFEVTGYQHHEAIQYPFSV.

Arg22 is a binding site for dUMP. The active-site Nucleophile is the Cys160. Residues 180–183, Asn191, and 221–223 contribute to the dUMP site; these read RSCD and HIY. Asp183 is a (6R)-5,10-methylene-5,6,7,8-tetrahydrofolate binding site. Ser282 is a binding site for (6R)-5,10-methylene-5,6,7,8-tetrahydrofolate.

Belongs to the thymidylate synthase family. Bacterial-type ThyA subfamily. In terms of assembly, homodimer.

It is found in the cytoplasm. It carries out the reaction dUMP + (6R)-5,10-methylene-5,6,7,8-tetrahydrofolate = 7,8-dihydrofolate + dTMP. It participates in pyrimidine metabolism; dTTP biosynthesis. Catalyzes the reductive methylation of 2'-deoxyuridine-5'-monophosphate (dUMP) to 2'-deoxythymidine-5'-monophosphate (dTMP) while utilizing 5,10-methylenetetrahydrofolate (mTHF) as the methyl donor and reductant in the reaction, yielding dihydrofolate (DHF) as a by-product. This enzymatic reaction provides an intracellular de novo source of dTMP, an essential precursor for DNA biosynthesis. The chain is Thymidylate synthase from Shewanella loihica (strain ATCC BAA-1088 / PV-4).